Reading from the N-terminus, the 215-residue chain is ATP-dependent Clp protease proteolytic subunit (215 aa).

Ser-111 (nucleophile) is an active-site residue. His-136 is an active-site residue.

Belongs to the peptidase S14 family. As to quaternary structure, fourteen ClpP subunits assemble into 2 heptameric rings which stack back to back to give a disk-like structure with a central cavity, resembling the structure of eukaryotic proteasomes.

It localises to the cytoplasm. The catalysed reaction is Hydrolysis of proteins to small peptides in the presence of ATP and magnesium. alpha-casein is the usual test substrate. In the absence of ATP, only oligopeptides shorter than five residues are hydrolyzed (such as succinyl-Leu-Tyr-|-NHMec, and Leu-Tyr-Leu-|-Tyr-Trp, in which cleavage of the -Tyr-|-Leu- and -Tyr-|-Trp bonds also occurs).. Functionally, cleaves peptides in various proteins in a process that requires ATP hydrolysis. Has a chymotrypsin-like activity. Plays a major role in the degradation of misfolded proteins. The polypeptide is ATP-dependent Clp protease proteolytic subunit (Hamiltonella defensa subsp. Acyrthosiphon pisum (strain 5AT)).